The primary structure comprises 902 residues: MRIISRQIVLLFSGFWGLAMGAFPSSVQIGGLFIRNTDQEYTAFRLAIFLHNTSPNASEAPFNLVPHVDNIETANSFAVTNAFCSQYSRGVFAIFGLYDKRSVHTLTSFCSALHISLITPSFPTEGESQFVLQLRPSLRGALLSLLDHYEWNCFVFLYDTDRGYSILQAIMEKAGQNGWHVSAICVENFNDVSYRQLLEELDRRQEKKFVIDCEIERLQNILEQIVSVGKHVKGYHYIIANLGFKDISLERFIHGGANVTGFQLVDFNTPMVIKLMDRWKKLDQREYPGSETPPKYTSALTYDGVLVMAETFRSLRRQKIDISRRGNAGDCLANPAAPWGQGIDMERTLKQVRIQGLTGNVQFDHYGRRVNYTMDVFELKSTGPRKVGYWNDMDKLVLIQDVPTLGNDTAAIENRTVVVTTIMESPYVMYKKNHEMFEGNDKYEGYCVDLASEIAKHIGIKYKIAIVPDGKYGARDADTKIWNGMVGELVYGKAEIAIAPLTITLVREEVIDFSKPFMSLGISIMIKKPQKSKPGVFSFLDPLAYEIWMCIVFAYIGVSVVLFLVSRFSPYEWHTEEPEDGKEGPSDQPPNEFGIFNSLWFSLGAFMQQGCDISPRSLSGRIVGGVWWFFTLIIISSYTANLAAFLTVERMVSPIESAEDLAKQTEIAYGTLDSGSTKEFFRRSKIAVYEKMWTYMRSAEPSVFTRTTAEGVARVRKSKGKFAFLLESTMNEYIEQRKPCDTMKVGGNLDSKGYGVATPKGSSLGNAVNLAVLKLNEPGLLDKLKNKWWYDKGECGSGGGDSKDKTSALSLSNVAGVFYILVGGLGLAMLVALIEFCYKSRAEAKRMKLTFSEAIRNKARLSITGSVGENGRVLTPDCPKAVHAGTAIRQSSGLAVIASDLP.

Positions 1-20 are cleaved as a signal peptide; sequence MRIISRQIVLLFSGFWGLAM. The Extracellular segment spans residues 22-544; the sequence is AFPSSVQIGG…GVFSFLDPLA (523 aa). N-linked (GlcNAc...) asparagine glycans are attached at residues Asn52, Asn56, Asn258, Asn371, Asn407, and Asn414. Cys84 and Cys331 are joined by a disulfide. L-glutamate contacts are provided by Pro500, Thr502, and Arg507. The helical transmembrane segment at 545–565 threads the bilayer; the sequence is YEIWMCIVFAYIGVSVVLFLV. Over 566 to 592 the chain is Cytoplasmic; that stretch reads SRFSPYEWHTEEPEDGKEGPSDQPPNE. Positions 593-608 form an intramembrane region, helical; Pore-forming; that stretch reads FGIFNSLWFSLGAFMQ. An intramembrane segment occupies 609–611; that stretch reads QGC. Cys611 carries the S-palmitoyl cysteine lipid modification. Topologically, residues 612–617 are cytoplasmic; the sequence is DISPRS. Residues 618 to 638 form a helical membrane-spanning segment; sequence LSGRIVGGVWWFFTLIIISSY. Residues 639–813 lie on the Extracellular side of the membrane; that stretch reads TANLAAFLTV…DKTSALSLSN (175 aa). Ser676, Thr677, and Glu727 together coordinate L-glutamate. A disulfide bridge connects residues Cys740 and Cys795. Residues 814 to 834 traverse the membrane as a helical segment; it reads VAGVFYILVGGLGLAMLVALI. Residues 835-902 lie on the Cytoplasmic side of the membrane; that stretch reads EFCYKSRAEA…GLAVIASDLP (68 aa). A lipid anchor (S-palmitoyl cysteine) is attached at Cys837. A Phosphoserine; by PKC/PRKCG modification is found at Ser862.

The protein belongs to the glutamate-gated ion channel (TC 1.A.10.1) family. GRIA4 subfamily. In terms of assembly, homotetramer or heterotetramer of pore-forming glutamate receptor subunits. Tetramers may be formed by the dimerization of dimers. Interacts with EPB41L1 via its C-terminus. Isoform 3 interacts with PICK1. Found in a complex with GRIA1, GRIA2, GRIA3, CNIH2, CNIH3, CACNG2, CACNG3, CACNG4, CACNG5, CACNG7 and CACNG8. Interacts with CACNG5 and PRKCG. Found in a complex with GRIA1, GRIA2, GRIA3, DLG4, CACNG8 and CNIH2. Palmitoylated. Depalmitoylated upon L-glutamate stimulation. ZDHHC3/GODZ specifically palmitoylates Cys-611, which leads to Golgi retention and decreased cell surface expression. In contrast, Cys-837 palmitoylation does not affect cell surface expression but regulates stimulation-dependent endocytosis. Post-translationally, phosphorylated at Ser-862 by PRKCG; phosphorylation increases plasma membrane-associated GRI4 expression.

The protein localises to the cell membrane. It is found in the postsynaptic cell membrane. It localises to the cell projection. Its subcellular location is the dendrite. The enzyme catalyses Ca(2+)(in) = Ca(2+)(out). It carries out the reaction Na(+)(in) = Na(+)(out). It catalyses the reaction Mg(2+)(in) = Mg(2+)(out). In terms of biological role, ionotropic glutamate receptor that functions as a ligand-gated cation channel, gated by L-glutamate and glutamatergic agonists such as alpha-amino-3-hydroxy-5-methyl-4-isoxazolepropionic acid (AMPA), quisqualic acid, and kainic acid. L-glutamate acts as an excitatory neurotransmitter at many synapses in the central nervous system and plays an important role in fast excitatory synaptic transmission. Binding of the excitatory neurotransmitter L-glutamate induces a conformation change, leading to the opening of the cation channel, and thereby converts the chemical signal to an electrical impulse upon entry of monovalent and divalent cations such as sodium and calcium. The receptor then desensitizes rapidly and enters a transient inactive state, characterized by the presence of bound agonist. In the presence of CACNG8, shows resensitization which is characterized by a delayed accumulation of current flux upon continued application of L-glutamate. The chain is Glutamate receptor 4 from Macaca fascicularis (Crab-eating macaque).